Consider the following 122-residue polypeptide: Small ribosomal subunit protein uS13 (122 aa).

Positions 97-122 (PCRGQRTKTNARTRKGPARTVAGKKK) are disordered.

The protein belongs to the universal ribosomal protein uS13 family. Part of the 30S ribosomal subunit. Forms a loose heterodimer with protein S19. Forms two bridges to the 50S subunit in the 70S ribosome.

Its function is as follows. Located at the top of the head of the 30S subunit, it contacts several helices of the 16S rRNA. In the 70S ribosome it contacts the 23S rRNA (bridge B1a) and protein L5 of the 50S subunit (bridge B1b), connecting the 2 subunits; these bridges are implicated in subunit movement. Contacts the tRNAs in the A and P-sites. The sequence is that of Small ribosomal subunit protein uS13 from Geobacter sp. (strain M21).